Reading from the N-terminus, the 933-residue chain is MWEPQGSLDPVLESIENELRDQVAEARSRWAGFDARLAIVQVGGREDSNVYIRMKLRAAENIGITAEHIQLPRDITETELLANITSLNESPYVHGIIVQMPLDSVHPIDSHAITDAVSPDKDVDGLNTINEGRVRVGDLSGFIPCTPAGCVELIKRTGVTIAGKNVVVLGRSRIVGTPVSELLKWEHATVTVCHSKTKNLSEITKTADILVVAIGRGEMVRGSWIKPGAVVIDCGINPISDPTKKSGQRLVGDVAYEEAVQVASHVTPVPGGVGPMTVAMLMRNTVQAARRQLDRLLAPTWPLRPLRITPLSPPPSDIVIARSQKPKDISELAHEIGLFSNEVSQYGRTKAKISLSVLDRMRNQQGAKYIVVAGITPTPLGEGKSTTLLGLVQALSAHRGRNSFAVMRQPSQGPTFGVKGGAAGGGYSQVIPMEEFNLHLTGDIHAGTAANNLLAAQMDARIFHELTQKDGPLFDRLVPKIKGVRKFSPIQLRRLKRLGITKTDPDTLTEGEKSKFARLNIDTSKIMWNRVVDLNDRYLRKITVGQSPTEKGFTRETAFDISVASEIMAILALGRDVEDIKERLANMVVALDKSGNPVTADDLGMTGALLVLLRDAFEPTLMQSLEGTPVLVHTGPFANIRHGCSSILADKIAMKLAGENGYVATEAGFGSDIGMEKFFDIKCRASGDTPHCAVIVSTVRALKMHGGGPPVSAGMPLNDVYVQENLELLSKGLCNLGKHISNGNKFGVPVVVAINKHGNDTPAELNLVKEFAVKNGAFRAVLCDHWAKGGLGALELADAVIEACDSKSKFDFLYPLQLSIQEKIQIIAKEMYGAGQVEYTDEVLEKIKTFTDMGYDKFPICMAKTSNSLTGDPAVKGAPTGFTLKINGIFASVGAGFVVPMVGEISKMPGLPTRPSIYDIDLNTKTGEIEGLF.

The methylenetetrahydrofolate dehydrogenase and cyclohydrolase stretch occupies residues 1-303 (MWEPQGSLDP…DRLLAPTWPL (303 aa)). Substrate is bound by residues 51 to 55 (YIRMK) and 98 to 100 (VQM). NADP(+)-binding positions include 170 to 172 (GRS) and serine 195. 270-274 (PGGVG) lines the substrate pocket. Residues 304 to 933 (RPLRITPLSP…TKTGEIEGLF (630 aa)) are formyltetrahydrofolate synthetase. 378-385 (TPLGEGKS) contacts ATP.

It in the N-terminal section; belongs to the tetrahydrofolate dehydrogenase/cyclohydrolase family. In the C-terminal section; belongs to the formate--tetrahydrofolate ligase family. In terms of assembly, homodimer.

It localises to the cytoplasm. The enzyme catalyses (6R)-5,10-methylene-5,6,7,8-tetrahydrofolate + NADP(+) = (6R)-5,10-methenyltetrahydrofolate + NADPH. It catalyses the reaction (6R)-5,10-methenyltetrahydrofolate + H2O = (6R)-10-formyltetrahydrofolate + H(+). The catalysed reaction is (6S)-5,6,7,8-tetrahydrofolate + formate + ATP = (6R)-10-formyltetrahydrofolate + ADP + phosphate. It functions in the pathway one-carbon metabolism; tetrahydrofolate interconversion. The sequence is that of C-1-tetrahydrofolate synthase, cytoplasmic from Spodoptera frugiperda (Fall armyworm).